We begin with the raw amino-acid sequence, 369 residues long: RNA pseudouridine synthase 5 (369 aa).

The 58-residue stretch at alanine 47–aspartate 104 folds into the S4 RNA-binding domain.

It belongs to the pseudouridine synthase RluA family.

The catalysed reaction is a uridine in RNA = a pseudouridine in RNA. The chain is RNA pseudouridine synthase 5 from Arabidopsis thaliana (Mouse-ear cress).